Reading from the N-terminus, the 98-residue chain is MVPCRLRPFLWNSPKVAVKRIPRQCIEGIVVSTKMQKTVVIEVERTKKHPKYGKTVQYTKKYKIHDPLEECSVGDRVLAHETRHFSKTKYFRFYRKLY.

This sequence belongs to the universal ribosomal protein uS17 family. As to quaternary structure, part of the 30S ribosomal subunit.

Functionally, one of the primary rRNA binding proteins, it binds specifically to the 5'-end of 16S ribosomal RNA. The sequence is that of Small ribosomal subunit protein uS17B from Bacteroides thetaiotaomicron (strain ATCC 29148 / DSM 2079 / JCM 5827 / CCUG 10774 / NCTC 10582 / VPI-5482 / E50).